Here is a 141-residue protein sequence, read N- to C-terminus: MGSRAVLLLKGPSPPKHSILFLLNHKKISPAPSIRRFTTKATANGSSLEPPDVARLAETARISLTPQQVEEFGPKIRQVIDWHALLSVDLDSVEPSIRADTEGDNLRHDNPETFENREAIIAAVPNYEDPYVKVPKVLNKE.

It belongs to the GatC family. As to quaternary structure, subunit of the heterotrimeric GatCAB amidotransferase (AdT) complex, composed of A, B and C subunits.

The protein resides in the mitochondrion. It is found in the plastid. It localises to the chloroplast. It carries out the reaction L-glutamyl-tRNA(Gln) + L-glutamine + ATP + H2O = L-glutaminyl-tRNA(Gln) + L-glutamate + ADP + phosphate + H(+). Its function is as follows. Allows the formation of correctly charged Gln-tRNA(Gln) through the transamidation of misacylated Glu-tRNA(Gln) in chloroplasts and mitochondria. The reaction takes place in the presence of glutamine and ATP through an activated gamma-phospho-Glu-tRNA(Gln). This is Glutamyl-tRNA(Gln) amidotransferase subunit C, chloroplastic/mitochondrial from Populus trichocarpa (Western balsam poplar).